The chain runs to 136 residues: Cytidine deaminase (136 aa).

The CMP/dCMP-type deaminase domain occupies 1 to 128 (MNRQELITEA…ELLPGAFSSE (128 aa)). 42–44 (NIE) provides a ligand contact to substrate. Residue Cys-53 participates in Zn(2+) binding. Residue Glu-55 is the Proton donor of the active site. Positions 86 and 89 each coordinate Zn(2+).

Belongs to the cytidine and deoxycytidylate deaminase family. In terms of assembly, homotetramer. The cofactor is Zn(2+).

The catalysed reaction is cytidine + H2O + H(+) = uridine + NH4(+). The enzyme catalyses 2'-deoxycytidine + H2O + H(+) = 2'-deoxyuridine + NH4(+). In terms of biological role, this enzyme scavenges exogenous and endogenous cytidine and 2'-deoxycytidine for UMP synthesis. This is Cytidine deaminase (cdd) from Bacillus subtilis (strain 168).